The primary structure comprises 178 residues: Large ribosomal subunit protein uL6 (178 aa).

This sequence belongs to the universal ribosomal protein uL6 family. Part of the 50S ribosomal subunit.

This protein binds to the 23S rRNA, and is important in its secondary structure. It is located near the subunit interface in the base of the L7/L12 stalk, and near the tRNA binding site of the peptidyltransferase center. The polypeptide is Large ribosomal subunit protein uL6 (Kocuria rhizophila (strain ATCC 9341 / DSM 348 / NBRC 103217 / DC2201)).